The primary structure comprises 169 residues: MARTVNLKGNPVTLVGPELKVGDRAPEAVVVTKDLQEKIVGGAKDVVQVIITVPSLDTPVCETETKKFNEIMAGMEGVDVTVVSMDLPFAQKRFCESFNIQNVTVASDFRYRDMEKYGVLIGEGALKGILARAVFIIDKEGKVAYVQLVPEITEEPNYDEVVNKVKELI.

Residues 19-167 (LKVGDRAPEA…YDEVVNKVKE (149 aa)) enclose the Thioredoxin domain. C61 acts as the Cysteine sulfenic acid (-SOH) intermediate in catalysis. Residues C61 and C95 are joined by a disulfide bond.

It belongs to the peroxiredoxin family. Tpx subfamily. As to quaternary structure, homodimer.

It carries out the reaction a hydroperoxide + [thioredoxin]-dithiol = an alcohol + [thioredoxin]-disulfide + H2O. Thiol-specific peroxidase that catalyzes the reduction of hydrogen peroxide and organic hydroperoxides to water and alcohols, respectively. Plays a role in cell protection against oxidative stress by detoxifying peroxides. The sequence is that of Thiol peroxidase from Aquifex aeolicus (strain VF5).